Here is a 397-residue protein sequence, read N- to C-terminus: Homeobox protein knotted-1-like 2 (397 aa).

3 disordered regions span residues 43–68 (TFHL…SPGT), 172–191 (FEAR…DPEL), and 233–276 (NNNA…PRAE). Gly residues predominate over residues 49-58 (SGGGGGGGSG). The ELK domain occupies 279–299 (ELKNHLLRKYSGYLSSLKQEL). Residues 300–363 (SKKKKKGKLP…NQRKRHWKPS (64 aa)) constitute a DNA-binding region (homeobox; TALE-type).

The protein belongs to the TALE/KNOX homeobox family. In terms of tissue distribution, expressed only in the stems.

The protein localises to the nucleus. Probably binds to the DNA sequence 5'-TGAC-3'. The protein is Homeobox protein knotted-1-like 2 of Malus domestica (Apple).